Here is a 93-residue protein sequence, read N- to C-terminus: Small ribosomal subunit protein uS19 (93 aa).

The protein belongs to the universal ribosomal protein uS19 family.

In terms of biological role, protein S19 forms a complex with S13 that binds strongly to the 16S ribosomal RNA. The polypeptide is Small ribosomal subunit protein uS19 (Mycobacteroides abscessus (strain ATCC 19977 / DSM 44196 / CCUG 20993 / CIP 104536 / JCM 13569 / NCTC 13031 / TMC 1543 / L948) (Mycobacterium abscessus)).